The chain runs to 90 residues: Putative membrane protein insertion efficiency factor (90 aa).

This sequence belongs to the UPF0161 family.

The protein localises to the cell inner membrane. Functionally, could be involved in insertion of integral membrane proteins into the membrane. The protein is Putative membrane protein insertion efficiency factor of Thermosynechococcus vestitus (strain NIES-2133 / IAM M-273 / BP-1).